Here is a 634-residue protein sequence, read N- to C-terminus: Chaperone protein HtpG (634 aa).

The interval 1 to 342 (MSVETQKETL…SNDLSLNVSR (342 aa)) is a; substrate-binding. Residues 343 to 559 (EILQKDPVID…EQDLGLQMRQ (217 aa)) are b. Positions 560–634 (ILEASGQKVP…LNKLLVELSA (75 aa)) are c.

Belongs to the heat shock protein 90 family. In terms of assembly, homodimer.

It localises to the cytoplasm. Its function is as follows. Molecular chaperone. Has ATPase activity. The sequence is that of Chaperone protein HtpG from Ectopseudomonas mendocina (strain ymp) (Pseudomonas mendocina).